A 268-amino-acid polypeptide reads, in one-letter code: Shikimate dehydrogenase (NADP(+)) (268 aa).

Residues 13–15 (SLS) and threonine 60 each bind shikimate. Lysine 64 functions as the Proton acceptor in the catalytic mechanism. Glutamate 76 contacts NADP(+). The shikimate site is built by asparagine 85 and aspartate 100. Residues 124–128 (GAGGA), 148–153 (NRTMAR), and isoleucine 209 each bind NADP(+). Position 211 (tyrosine 211) interacts with shikimate. Glycine 232 is a binding site for NADP(+).

The protein belongs to the shikimate dehydrogenase family. Homodimer.

The enzyme catalyses shikimate + NADP(+) = 3-dehydroshikimate + NADPH + H(+). The protein operates within metabolic intermediate biosynthesis; chorismate biosynthesis; chorismate from D-erythrose 4-phosphate and phosphoenolpyruvate: step 4/7. Its function is as follows. Involved in the biosynthesis of the chorismate, which leads to the biosynthesis of aromatic amino acids. Catalyzes the reversible NADPH linked reduction of 3-dehydroshikimate (DHSA) to yield shikimate (SA). The polypeptide is Shikimate dehydrogenase (NADP(+)) (Staphylococcus aureus (strain bovine RF122 / ET3-1)).